Consider the following 72-residue polypeptide: Small ribosomal subunit protein bS18 (72 aa).

It belongs to the bacterial ribosomal protein bS18 family. As to quaternary structure, part of the 30S ribosomal subunit. Forms a tight heterodimer with protein bS6.

In terms of biological role, binds as a heterodimer with protein bS6 to the central domain of the 16S rRNA, where it helps stabilize the platform of the 30S subunit. The sequence is that of Small ribosomal subunit protein bS18 from Aquifex aeolicus (strain VF5).